Here is a 282-residue protein sequence, read N- to C-terminus: Tyrosine recombinase XerA (282 aa).

The Core-binding (CB) domain maps to 2–79 (SEPNEVIEEF…ALRAYFRFEG (78 aa)). Positions 95-271 (SLPKALTREE…TVEHLRKAQE (177 aa)) constitute a Tyr recombinase domain. Residues R132, K157, H223, R226, and H249 contribute to the active site. Y258 serves as the catalytic O-(3'-phospho-DNA)-tyrosine intermediate.

It belongs to the 'phage' integrase family. XerA subfamily.

It localises to the cytoplasm. Its function is as follows. Site-specific tyrosine recombinase, which acts by catalyzing the cutting and rejoining of the recombining DNA molecules. The protein is Tyrosine recombinase XerA of Thermococcus kodakarensis (strain ATCC BAA-918 / JCM 12380 / KOD1) (Pyrococcus kodakaraensis (strain KOD1)).